The primary structure comprises 473 residues: UDP-glycosyltransferase 91D2 (473 aa).

His26 acts as the Proton acceptor in catalysis. His26 is an an anthocyanidin binding site. Asp121 serves as the catalytic Charge relay. The UDP-alpha-D-glucose site is built by Ala344, Gln346, His361, Ser366, and Glu369. Gly384 contributes to the an anthocyanidin binding site. 2 residues coordinate UDP-alpha-D-glucose: Asp385 and Gln386.

The protein belongs to the UDP-glycosyltransferase family.

It carries out the reaction steviolmonoside + UDP-alpha-D-glucose = steviolbioside + UDP + H(+). The enzyme catalyses rubusoside + UDP-alpha-D-glucose = stevioside + UDP + H(+). The catalysed reaction is stevioside + UDP-alpha-D-glucose = rebaudioside E + UDP + H(+). It catalyses the reaction rebaudioside A + UDP-alpha-D-glucose = rebaudioside D + UDP + H(+). In terms of biological role, involved in the biosynthesis of steviol glycosides in leaves. Converts the mono-glycoside steviolmonoside to the bi-glycoside steviolbioside. Converts the bi-glycoside rubusoside to the tri-glycoside stevioside. Converts the tri-glycoside stevioside to the tetra-glycoside rebaudioside E. Converts the tetra-glycoside rebaudioside A to the penta-glycoside rebaudioside E. The protein is UDP-glycosyltransferase 91D2 of Stevia rebaudiana (Stevia).